Here is a 107-residue protein sequence, read N- to C-terminus: MTFVVTDNCIKCKYTDCVEVCPVDCFYEGPNFLVIHPDECIDCALCEPECPAQAIFSEDEVPSGMENFIELNAELAEIWPNITERKDALPDAEEWDGKPGKIADLER.

2 consecutive 4Fe-4S ferredoxin-type domains span residues 2–30 (TFVV…YEGP) and 31–60 (NFLV…SEDE). [3Fe-4S] cluster-binding residues include Cys9 and Cys17. [4Fe-4S] cluster contacts are provided by Cys21, Cys40, Cys43, and Cys46. Residue Cys50 coordinates [3Fe-4S] cluster.

It depends on [4Fe-4S] cluster as a cofactor. [3Fe-4S] cluster is required as a cofactor.

In terms of biological role, ferredoxins are iron-sulfur proteins that transfer electrons in a wide variety of metabolic reactions. This chain is Ferredoxin 1 (fdxA), found in Pseudomonas putida (strain ATCC 47054 / DSM 6125 / CFBP 8728 / NCIMB 11950 / KT2440).